The following is a 2851-amino-acid chain: MSHNKPVNEPIVIIGSGCRFAGGANSPSKLWDLLRNPKDLRSDVTSRFNSQGYYHKDGTHHGHMNVLQSYLIGEDTRLFDAEFFGVNPVEAKAMDPQQRLLLEVVYEAIESAGLSMERMRGSDTAVFAGLMCGDYEAMMLRDLDQAPTHFAIGTSRAILSNRVSYFFDWHGPSITIDTACSSSLVAVHHAVQALRSGDSHAAIACGSNLILGPEMYVIESKLKMLSPDGLSRMWDKDANGYARGEGVTAVVLKTLSQALADNDRIEAVIRETGVNQDGATPGITMPSASAQRALIHSVYRKAGLDPESPNDRPQYIESHGTGTPAGGSIKTVLGHTEGSAGIAALLKVTKAIQNATVPPNLWFQQLNHKLEPFYGNIQIPTQPVTWPATEKRRRKRASINNFGFGGTNAHAIVEGYEPKEEIPPPSFHHVDATVSTPFVFSAASKESLRANLAAYALHLDAHPQISTRDLAYTLRERRSVLPFRIAFPESNTKDLKLSIAARLSESDGEGLGVRTWAANNGGSSKLLGIFTGQGAQYARMGTELLAQTNMARKTLEELEGYLAELPEEDRPSWSLQSELLADPSVSRVGEAAISQPLCTAVQIILVKLLCSAKVRFDTVIGHSSGEIAAAYAAGYLSARDALLVAYYRGLHCKLAASPNGNVKGAMLAAGTSLEDATELCEDEEFSGRINVAASNSSSSVTISGDEDAIDELATVFDDEKKFNRRLKVDTAYHSKHMLPCFEPYVASLRRVGITVLPGNDQCTWISSVHEGRAINPATDELADVYWAQNMTKPVLFSQAVQAAVAPVRGGEPFAAALEVGPHAALAGPAKQTIQEVAQKEIPYHGSLVRGENATKAFATCLGFLWERLDAASLDLGSCEAALSSSGGVQQYTVLADLPTYQWKHETVYWAESRRSRRMRLREGPFHQLLGNVSPDSAPHILRWKNVLKPKEMTWLEGHQVQNQVVLPAATYICTAIEAARSLAQGKNIQLIELSNFCIHNAITFDQNDVGVEVLVELSRINVKENHVNATFTYTAGLGDETNDLALAANGELNILLVDDDPSLALFPERQEPPPHMIPVQPSRLYDFMKGLEYDFSGPFQSLAKLERKLGTATCLAKKARKSVPDADDLLVHPVDLDAAFQSVMLAYSYPGDDQLRLLHLPTSIERLRVNPAALSSQKYVENDTTILDSTCTTADRAEPGNGFSGSVNMYAAGFDHAAIQVEQVKFKPVGSDAKDDRNVFYKMHWVPSKPDGLLAAASVPITERDRKLMFVLSRIAAYYLRKFDEMIAEDDPARLESPLCHYMRYARHMMGLLRAGEHKWAYKEWLQDTEQDVFDDIASKGFQDNSDVRIMLLVGSTMPRVFRRETTMLEHFRTSGLLDEYYSNGFGTKQCTLWVAGVLKQLADCNPHLNLLEIGAGTGSATKTILKSVGHDFASYTFTDISSSFFENAAETFSDYGSRMVFKVCNAENDPVEQGFEAGTYDVVIAFMVIHACAKLDEAVANLRKLLKPGGLLVLGEGASDGAMQAGAGFIFGTLPGWWRGVDEGRTLSPLVSASEWQVILRDAGFSGIDTMSPPELFDAFGITLFVSTAVDERIEFVRNPRAKASRAVYNKVVVIGGITSTIAKLAEEIQTVLTPLAIQVLLCTSLEDLQENVLDDETVIISLVDLEAPVFKDITSERWYKFRLLFETKREILWLTSGRLEDEPYSNMTVGFGRSAMHEEETLRVQYLDVADVSQLNAVMVMQYLLRFTSSELDKSDILYTKEPEVIIDANGRELVPRLFTIQAANNRLNSVTRPIYEDVDTSQSVVELRYAKEEPSFRKLSRYEVSAKLEPSHDTTIKLRVAYSVISALRCPAGYQYLIMGFDESGARRVALVNSLTSVLCVPLKSTILCELYDMSEPSYLTLLAAEIIAMTIVDPLFTGQKLAILNASKLIIQAIASYATAKGVETTFIVDAGGEFVPKDVAVQSHLPLYPSRSDMSFILPTNLACFVSFSALNKADSEDAMKSLLPFYCQKMNTSTLFSTHGVDTGALGATAQHVLSRAISSRKGRVIDWTPPSTSLSVRITRFEMTQLFKADKTYWLVGLSGALGISLCDWMIERGVKYLVLTSRNPKIDERWIENHEKHGVMIKILLCDVTDEAAIKDVHQTIVRTLPPIAGLLNGAMVLRDVSVRNMEYAQVTDVIRPKVLGSIHLDRIFHDIDLDFFVLLSSINCVIGNVGQANYAAANMGMIGVAGHRRKRGLRSSVVNVGAIIGVGYITQSDRQLDVTVAKTAMMHLSEQDFHQIFAECMEAGHLDNDSGPEISTGLLEITPDTIDIPPWYSDPKFKRFQVHQAAAGAGKAEVANSASTQELLLACRSQADITKVVQQAYCAQLRRILQVSTADEDLMMMRGVDLGFDSLLSVDVRSWFLKNFRVSIPVLKIMANDVRMSTLVDLAAESIPAELIPHVQQQQQQAGRQDASSNTSSDDETASTLPTSPESASPGTSTPVPEKDISPVDTFNSVDWYFETTPPSISTFSELTSAPAPRSDPKVVVLTGCSGLLGHHLLSTLIAQPSIRKIICLAVRSLPSRLSSGELPLPGDKIEYHAGDLTAPQLGLSTSTWISIFKQADAVIHNGSDTSHLKYYSALKLANVDSTKQLVSTCLQRMIPFHYVSSAGVALFAERDAFPPVSCTTTGKTPPADGSHGYMCGKWVCEKMLERVYEQYHLPIVIQRPSTIIRSGEDAAVERAGFDWVNSLLHFAHQTQTVPRVDHNAGAFDLVSVDTCCSDVARKLTRATKERITYVNNVGDVVIPMASMADVGLDRIGKRYNVLTMDEWTKTVVEAGMHPAVAALIETFDEPGVEKYPMLLRE.

One can recognise a Ketosynthase family 3 (KS3) domain in the interval 8 to 415 (NEPIVIIGSG…GTNAHAIVEG (408 aa)). The disordered stretch occupies residues 304–324 (LDPESPNDRPQYIESHGTGTP). Positions 529–851 (IFTGQGAQYA…PYHGSLVRGE (323 aa)) are acyl transferase (AT) domain. An N-terminal hotdog fold region spans residues 926-1059 (HQLLGNVSPD…GELNILLVDD (134 aa)). The PKS/mFAS DH domain occupies 926 to 1235 (HQLLGNVSPD…FKPVGSDAKD (310 aa)). The dehydratase (DH) domain stretch occupies residues 949–1242 (PKEMTWLEGH…AKDDRNVFYK (294 aa)). Histidine 958 (proton acceptor; for dehydratase activity) is an active-site residue. The tract at residues 1076–1235 (MIPVQPSRLY…FKPVGSDAKD (160 aa)) is C-terminal hotdog fold. Aspartate 1137 serves as the catalytic Proton donor; for dehydratase activity. The interval 1390–1577 (QCTLWVAGVL…GIDTMSPPEL (188 aa)) is methyltransferase (MT) domain. Residues 2079 to 2252 (TYWLVGLSGA…RSSVVNVGAI (174 aa)) form a ketoreductase (KR)domain region. Residues 2360–2443 (ADITKVVQQA…DLAAESIPAE (84 aa)) enclose the Carrier domain. An O-(pantetheine 4'-phosphoryl)serine modification is found at serine 2399. The interval 2447 to 2496 (HVQQQQQQAGRQDASSNTSSDDETASTLPTSPESASPGTSTPVPEKDISP) is disordered. The segment covering 2455–2488 (AGRQDASSNTSSDDETASTLPTSPESASPGTSTP) has biased composition (polar residues). The tract at residues 2535 to 2767 (LTGCSGLLGH…DLVSVDTCCS (233 aa)) is reductase (R) domain.

Requires pantetheine 4'-phosphate as cofactor.

The enzyme catalyses 7 malonyl-CoA + acetyl-CoA + 10 AH2 + 5 S-adenosyl-L-methionine + 2 H(+) = dehydroprobetaenone I + 10 A + 5 S-adenosyl-L-homocysteine + 7 CO2 + 8 CoA + 6 H2O. It participates in mycotoxin biosynthesis. Highly reducing polyketide synthase; part of the gene cluster that mediates the biosynthesis of the phytotoxin stemphyloxin II. The first step of the pathway is the synthesis of dehydroprobetaenone I by the polyketide synthase sthA and the enoyl reductase sthE via condensation of one acetyl-CoA starter unit with 7 malonyl-CoA units and 5 methylations. The C-terminal reductase (R) domain of sthA catalyzes the reductive release of the polyketide chain. Because sthA lacks a designated enoylreductase (ER) domain, the required activity is provided the enoyl reductase sthE. The short-chain dehydrogenase/reductase sthC then catalyzes reduction of dehydroprobetaenone I to probetaenone I. The cytochrome P450 monooxygenase sthF catalyzes successive epoxidation, oxidation (resulting from epoxide opening) and hydroxylation to install a tertiary alcohol in the decaline ring to yield betaenone C from dehydroprobetaenone I and betaenone B from probetaenone I. The FAD-linked oxidoreductase sthB is responsible for the conversion of betaenone C to betaenone A via an intramolecular aldol reaction between C-1 and C-17 to form the bridged tricyclic system in betaenone A. Finally, the cytochrome P450 monooxygenase sthD catalyzes the hydroxylation of C-15 to afford the final metabolite stemphyloxin II. This chain is Highly reducing polyketide synthase sthA, found in Phaeosphaeria nodorum (strain SN15 / ATCC MYA-4574 / FGSC 10173) (Glume blotch fungus).